The sequence spans 238 residues: Probable xyloglucan-specific endo-beta-1,4-glucanase A (238 aa).

The N-terminal stretch at Met-1 to Ala-18 is a signal peptide. 2 N-linked (GlcNAc...) asparagine glycosylation sites follow: Asn-106 and Asn-171.

The protein belongs to the glycosyl hydrolase 12 (cellulase H) family.

Its subcellular location is the secreted. It catalyses the reaction xyloglucan + H2O = xyloglucan oligosaccharides.. Functionally, catalyzes endohydrolysis of 1,4-beta-D-glucosidic linkages in xyloglucan with retention of the beta-configuration of the glycosyl residues. Specific for xyloglucan and does not hydrolyze other cell wall components. This is Probable xyloglucan-specific endo-beta-1,4-glucanase A (xgeA) from Aspergillus fumigatus (strain CBS 144.89 / FGSC A1163 / CEA10) (Neosartorya fumigata).